Here is a 364-residue protein sequence, read N- to C-terminus: Probable dual-specificity RNA methyltransferase RlmN (364 aa).

Glu-107 functions as the Proton acceptor in the catalytic mechanism. The 234-residue stretch at 113–346 (HDYGNSVCVT…ATIRREQGSD (234 aa)) folds into the Radical SAM core domain. Cys-120 and Cys-351 are oxidised to a cystine. [4Fe-4S] cluster contacts are provided by Cys-127, Cys-131, and Cys-134. S-adenosyl-L-methionine-binding positions include 177–178 (GE), Ser-209, 232–234 (SLH), and Asn-308. The active-site S-methylcysteine intermediate is Cys-351.

Belongs to the radical SAM superfamily. RlmN family. It depends on [4Fe-4S] cluster as a cofactor.

It localises to the cytoplasm. The enzyme catalyses adenosine(2503) in 23S rRNA + 2 reduced [2Fe-2S]-[ferredoxin] + 2 S-adenosyl-L-methionine = 2-methyladenosine(2503) in 23S rRNA + 5'-deoxyadenosine + L-methionine + 2 oxidized [2Fe-2S]-[ferredoxin] + S-adenosyl-L-homocysteine. It carries out the reaction adenosine(37) in tRNA + 2 reduced [2Fe-2S]-[ferredoxin] + 2 S-adenosyl-L-methionine = 2-methyladenosine(37) in tRNA + 5'-deoxyadenosine + L-methionine + 2 oxidized [2Fe-2S]-[ferredoxin] + S-adenosyl-L-homocysteine. In terms of biological role, specifically methylates position 2 of adenine 2503 in 23S rRNA and position 2 of adenine 37 in tRNAs. Confers resistance to some classes of antibiotics. This Staphylococcus aureus (strain MW2) protein is Probable dual-specificity RNA methyltransferase RlmN.